The primary structure comprises 151 residues: Endoribonuclease YbeY (151 aa).

The Zn(2+) site is built by histidine 108, histidine 112, and aspartate 118.

The protein belongs to the endoribonuclease YbeY family. Zn(2+) is required as a cofactor.

Its subcellular location is the cytoplasm. In terms of biological role, single strand-specific metallo-endoribonuclease involved in late-stage 70S ribosome quality control and in maturation of the 3' terminus of the 16S rRNA. The protein is Endoribonuclease YbeY of Porphyromonas gingivalis (strain ATCC 33277 / DSM 20709 / CIP 103683 / JCM 12257 / NCTC 11834 / 2561).